Here is a 387-residue protein sequence, read N- to C-terminus: Colicin-N (387 aa).

Residues 1–11 (MGSNGADNAHN) show a composition bias toward polar residues. Positions 1–106 (MGSNGADNAH…ITITPDNSKP (106 aa)) are disordered. The span at 14 to 30 (FGGGKNPGIGNTSGAGS) shows a compositional bias: gly residues. Over residues 31 to 48 (NGSASSNRGNSNGWSWSN) the composition is skewed to low complexity. Gly residues predominate over residues 78–87 (GNSGNRGNNG). 2 helical membrane passes run 325 to 345 (IIGG…LSFL) and 350 to 370 (LAVT…SSFI).

This sequence belongs to the channel forming colicin family.

It localises to the cell membrane. Its function is as follows. This colicin is a channel-forming colicin. This class of transmembrane toxins depolarize the cytoplasmic membrane, leading to dissipation of cellular energy. Colicins are polypeptide toxins produced by and active against E.coli and closely related bacteria. In Escherichia coli, this protein is Colicin-N (cna).